A 227-amino-acid chain; its full sequence is Large ribosomal subunit protein uL3 (227 aa).

Gln154 carries the N5-methylglutamine modification.

It belongs to the universal ribosomal protein uL3 family. As to quaternary structure, part of the 50S ribosomal subunit. Forms a cluster with proteins L14 and L19. Post-translationally, methylated by PrmB.

Its function is as follows. One of the primary rRNA binding proteins, it binds directly near the 3'-end of the 23S rRNA, where it nucleates assembly of the 50S subunit. In Acidiphilium cryptum (strain JF-5), this protein is Large ribosomal subunit protein uL3.